The chain runs to 400 residues: Argininosuccinate synthase (400 aa).

Residue 8–16 (AYSGGLDTS) participates in ATP binding. L-citrulline contacts are provided by Tyr86 and Ser91. Residue Gly116 coordinates ATP. The L-aspartate site is built by Thr118, Asn122, and Asp123. Asn122 contributes to the L-citrulline binding site. Positions 126, 175, 184, 260, and 272 each coordinate L-citrulline.

The protein belongs to the argininosuccinate synthase family. Type 1 subfamily. In terms of assembly, homotetramer.

Its subcellular location is the cytoplasm. It carries out the reaction L-citrulline + L-aspartate + ATP = 2-(N(omega)-L-arginino)succinate + AMP + diphosphate + H(+). It functions in the pathway amino-acid biosynthesis; L-arginine biosynthesis; L-arginine from L-ornithine and carbamoyl phosphate: step 2/3. This chain is Argininosuccinate synthase, found in Clostridium acetobutylicum (strain ATCC 824 / DSM 792 / JCM 1419 / IAM 19013 / LMG 5710 / NBRC 13948 / NRRL B-527 / VKM B-1787 / 2291 / W).